We begin with the raw amino-acid sequence, 279 residues long: Large ribosomal subunit protein uL2 (279 aa).

Positions 222-279 are disordered; sequence GMAMNPVDHPMGGGEGKSKSGGGRRHPKSPWGQLAKGLKTRNKKKASQKLIVRGRNAK. Gly residues predominate over residues 232–242; that stretch reads MGGGEGKSKSG. Over residues 259–268 the composition is skewed to basic residues; it reads LKTRNKKKAS.

Belongs to the universal ribosomal protein uL2 family. Part of the 50S ribosomal subunit. Forms a bridge to the 30S subunit in the 70S ribosome.

Functionally, one of the primary rRNA binding proteins. Required for association of the 30S and 50S subunits to form the 70S ribosome, for tRNA binding and peptide bond formation. It has been suggested to have peptidyltransferase activity; this is somewhat controversial. Makes several contacts with the 16S rRNA in the 70S ribosome. The sequence is that of Large ribosomal subunit protein uL2 from Chlorobium phaeobacteroides (strain DSM 266 / SMG 266 / 2430).